The primary structure comprises 671 residues: tRNA(Met) cytidine acetyltransferase TmcA (671 aa).

ATP-binding positions include Gln-180, Gly-202–Gln-211, and Arg-319. The N-acetyltransferase domain maps to Gln-356–Leu-531. Residues Ile-461–Val-463, Gln-468–Arg-474, Glu-499, and Arg-506 contribute to the acetyl-CoA site.

It belongs to the RNA cytidine acetyltransferase family. TmcA subfamily.

The protein resides in the cytoplasm. The catalysed reaction is cytidine(34) in elongator tRNA(Met) + acetyl-CoA + ATP + H2O = N(4)-acetylcytidine(34) in elongator tRNA(Met) + ADP + phosphate + CoA + H(+). It carries out the reaction 2-hydroxyisobutanoyl-CoA + L-lysyl-[protein] = N(6)-(2-hydroxyisobutanoyl)-L-lysyl-[protein] + CoA + H(+). Its activity is regulated as follows. ATP/GTP hydrolysis is stimulated by the addition of acetyl-CoA and tRNA(Met). Binding of acetyl-CoA to TmcA activates both ATPase and tRNA-binding activities. ATP promotes the 2-hydroxyisobutyryltransferase activity. Catalyzes the formation of N(4)-acetylcytidine (ac(4)C) at the wobble position of tRNA(Met), by using acetyl-CoA as an acetyl donor and ATP (or GTP). It recognizes the wobble base of tRNA(Met), thus distinguishing between tRNA(Met) and the structurally similar tRNA(Ile2). Could use an RNA helicase motor driven by ATP hydrolysis to deliver the wobble base of tRNA(Met) to the acetyltransferase domain of TmcA. In terms of biological role, also functions as a lysine 2-hydroxyisobutyryltransferase to regulate transcription. Can specifically catalyze the 2-hydroxyisobutyrylation (Khib) of the DNA-binding protein H-NS. Hydroxyisobutyrylation of H-NS decreases its DNA-binding activity, promotes the expression of acid-resistance genes and enhances bacterial survival under extreme acid stress. This Escherichia coli (strain K12) protein is tRNA(Met) cytidine acetyltransferase TmcA.